The primary structure comprises 419 residues: uncharacterized protein (419 aa).

7 helical membrane-spanning segments follow: residues 16–36 (IMAK…LVVT), 186–206 (LVYI…SMIA), 235–255 (LLGI…AGSL), 283–303 (VIYA…LAAF), 318–338 (ITPM…GLNA), 340–360 (DAGF…IMFL), and 369–389 (FWQA…LAVI).

This sequence to M.jannaschii MJ1024.

It localises to the cell membrane. This is an uncharacterized protein from Bacillus subtilis (strain 168).